The following is a 159-amino-acid chain: 17 kDa surface antigen (159 aa).

An N-terminal signal peptide occupies residues 1 to 19; that stretch reads MKLLSKIMIIALAASMLQA. C20 is lipidated: N-palmitoyl cysteine. Residue C20 is the site of S-diacylglycerol cysteine attachment.

Belongs to the rickettsiale 17 kDa surface antigen family.

It is found in the cell outer membrane. The chain is 17 kDa surface antigen (omp) from Rickettsia felis (strain ATCC VR-1525 / URRWXCal2) (Rickettsia azadi).